We begin with the raw amino-acid sequence, 141 residues long: MLQSLNHLTLAVSDLQKSVTFWHELLGLTLHARWNTGAYLTCGDLWVCLSYDEARQYVPPQESDYTHYAFTVAEEDFEPLSQRLEQAGVTIWKQNKSEGASFYFLDPDGHKLELHVGSLAARLAACREKPYAGMVFTSDEA.

Residues 4 to 117 (SLNHLTLAVS…DGHKLELHVG (114 aa)) form the VOC domain. Mn(2+)-binding residues include histidine 7, histidine 67, and glutamate 113.

Belongs to the fosfomycin resistance protein family. In terms of assembly, homodimer. Requires Mn(2+) as cofactor.

It localises to the cytoplasm. The catalysed reaction is RX + glutathione = an S-substituted glutathione + a halide anion + H(+). Requires the monovalent cation K(+) for optimal activity. Functionally, metalloglutathione transferase which confers resistance to fosfomycin by catalyzing the addition of glutathione to fosfomycin. The chain is Glutathione transferase FosA (fosA) from Serratia marcescens.